We begin with the raw amino-acid sequence, 628 residues long: Zinc finger protein 555 (628 aa).

A KRAB domain is found at 4–77 (VVFEDVAVDF…ESKIATFTRN (74 aa)). The C2H2-type 1; degenerate zinc finger occupies 172 to 194 (YQCQECGQAYSCRSHLRMHVRTH). C2H2-type zinc fingers lie at residues 200–222 (YVCK…VRIH), 228–250 (YECK…LRSH), 256–278 (YKCK…TITH), 284–306 (YKCK…MISH), 312–334 (HKCK…MITH), 340–362 (YECK…ERIH), 368–390 (YECK…ERTH), 396–418 (YECN…MRVH), 424–446 (YECK…MRTH), 452–474 (YECK…VRMH), 480–502 (YECK…MRRH), 508–530 (YKCK…VRTH), 536–558 (YECK…MRLH), and 564–586 (YQCK…VRIH).

Belongs to the krueppel C2H2-type zinc-finger protein family.

It localises to the nucleus. May be involved in transcriptional regulation. The chain is Zinc finger protein 555 (ZNF555) from Homo sapiens (Human).